A 340-amino-acid chain; its full sequence is Functional amyloid subunit FapC (340 aa).

An N-terminal signal peptide occupies residues 1–24 (MKATMVLTPLALAMAAVLSVSAYA). A FapC_R1 repeat occupies 67 to 100 (NNASVSGSIKDASGNVGVNVAAGDNNQQANAAAL). The interval 101–133 (ASADASFVFGTATASTSVLQSGYGNTLNNYSNP) is linker 1. Residues 134–167 (NTASLSNSANNVSGNLGVNVAAGNFNQQKNDLAA) form a FapC_R2 repeat. Residues 168–290 (AVSNGQYSTA…AIVGFKTPVT (123 aa)) are linker 2. Residues 291-324 (NNASLSNSLQNVSGNVGVNIAAGGGNQQSNSLSI) form a FapC_R3 repeat. Residues 328 to 331 (CSSC) carry the Cys-X-X-Cys motif.

This sequence belongs to the FapB/FapC family. The major component of purified amyloid fibrils. Fibrils are resistant to boiling in 2% (weight/vol) SDS and require &gt;90% (vol/vol) formic acid to dissolve. Interacts with FapA in vitro.

The protein resides in the fimbrium. The protein localises to the secreted. Its function is as follows. The major functional amyloid subunit in this bacterium. Upon overexpression of the endogenous six-gene locus (fapA-fapF), cells form large clumps during liquid growth, make large amounts of biofilm and produce amyloid fibrils. The polypeptide is Functional amyloid subunit FapC (Pseudomonas aeruginosa (strain ATCC 15692 / DSM 22644 / CIP 104116 / JCM 14847 / LMG 12228 / 1C / PRS 101 / PAO1)).